A 126-amino-acid polypeptide reads, in one-letter code: Protein ApaG (126 aa).

The region spanning 2–126 (SDTQHQVNVR…FRLAVPGALH (125 aa)) is the ApaG domain.

The polypeptide is Protein ApaG (Pseudomonas paraeruginosa (strain DSM 24068 / PA7) (Pseudomonas aeruginosa (strain PA7))).